The primary structure comprises 64 residues: Cold shock protein CapA (64 aa).

The region spanning 7 to 64 (GTVKWFNDEKGFGFITPQGGGDDLFVHFKAIESDGFKSLKEGQTVSFVAEKGQKGMQA) is the CSD domain.

Its subcellular location is the cytoplasm. Its function is as follows. Affects cell viability at low temperatures. This is Cold shock protein CapA (capA) from Pseudomonas fragi.